Here is a 578-residue protein sequence, read N- to C-terminus: MRVGAFLGRSLFSCSHVRGALVRRRTPQHSCSFHISKPRSLSHVVPVFSRAPLFSERTAMVDQHGKHTYKDLYIRSQALSKMIIQLLGNPSHNNTPERVSFLCPNNSSYVVCQWAVWMSGAIAVPLCKSHPPSELKYVLQDSQSALVVAEESYTNVLSPLAEQLGIPVLTMSGSQNLHPSELLQEIKISQLDLDWKDRGAMIIYTSGTTGRPKGVLSTHYNLYSMVTALVNEWGWTKEDSILHVLPLHHVHGVVNKLMCPLWVGATCVILPEFCPKTVWQHFLGRDVPSINIFMAVPTIYSKLIAYYEQHFTHSNVREFVRAACQERIRLMVSGSSALPVPVLERWQEITGHTLLERYGMTEIGMALTNPLHGPRVPGAVGAPLPGVEVRTVTQNPRKEGTSYTTHAQGDSTGTMVSVGLENREGELQVRGPAVFKEYWNKRLDTQEAFTSDGWFKTGDTAMYKDGTYWILGRTSVDIIKSGGYKVSALEVERHLLGHPSITDVAVIGAPDVTWGQRVAAIVKLRDGHALSLQELKEWARAVMAPYCIPAELIRVEEIPRNQMGKINKKQLLVHFYPQ.

Residues 1–19 constitute a mitochondrion transit peptide; that stretch reads MRVGAFLGRSLFSCSHVRG. An ATP-binding site is contributed by 205 to 213; it reads TSGTTGRPK. Residues 394-413 are disordered; that stretch reads QNPRKEGTSYTTHAQGDSTG. ATP is bound by residues aspartate 459, arginine 473, and lysine 565.

The protein belongs to the ATP-dependent AMP-binding enzyme family.

Its subcellular location is the mitochondrion. The catalysed reaction is tetracosanoate + ATP + CoA = tetracosanoyl-CoA + AMP + diphosphate. It carries out the reaction malonate + ATP + CoA = malonyl-CoA + AMP + diphosphate. Functionally, catalyzes the initial reaction in intramitochondrial fatty acid synthesis, by activating malonate and methylmalonate, but not acetate, into their respective CoA thioester. May have some preference toward very-long-chain substrates. This is Malonate--CoA ligase ACSF3, mitochondrial from Xenopus laevis (African clawed frog).